We begin with the raw amino-acid sequence, 179 residues long: 5'-deoxynucleotidase VV1_0013 (179 aa).

A divalent metal cation is bound at residue histidine 53. Substrate contacts are provided by residues 62–65 and aspartate 122; that span reads DLPT. An a divalent metal cation-binding site is contributed by aspartate 122.

This sequence belongs to the 5DNU family. As to quaternary structure, homodimer. It depends on a divalent metal cation as a cofactor.

It localises to the cytoplasm. The enzyme catalyses a 2'-deoxyribonucleoside 5'-phosphate + H2O = a 2'-deoxyribonucleoside + phosphate. Functionally, catalyzes the strictly specific dephosphorylation of 2'-deoxyribonucleoside 5'-monophosphates. This chain is 5'-deoxynucleotidase VV1_0013, found in Vibrio vulnificus (strain CMCP6).